Consider the following 152-residue polypeptide: Large ribosomal subunit protein uL30 (152 aa).

This sequence belongs to the universal ribosomal protein uL30 family. In terms of assembly, part of the 50S ribosomal subunit.

The chain is Large ribosomal subunit protein uL30 from Methanosphaera stadtmanae (strain ATCC 43021 / DSM 3091 / JCM 11832 / MCB-3).